Here is a 955-residue protein sequence, read N- to C-terminus: Translation initiation factor IF-2 (955 aa).

The tract at residues 49-352 (AFSQSSESTE…QAPSFGGVKI (304 aa)) is disordered. Low complexity predominate over residues 77–88 (PQQQTKASAPSA). Composition is skewed to pro residues over residues 95 to 121 (PAVP…PGPR), 149 to 159 (RPVPKPGPRPG), 188 to 202 (RPGP…PPRP), and 209 to 223 (PPRP…PRPG). The segment covering 225-235 (GTAGGRPGSSA) has biased composition (gly residues). Residues 238–264 (PPRPVPRPGPRPSPMNMPASRPTPPGG) are compositionally biased toward pro residues. Residues 273 to 322 (SGGGRGRGGGGGAGPRGGGAGGGAPRTGFGGRPGGGRGRGGTAGAFGRPG) are compositionally biased toward gly residues. Basic residues predominate over residues 326 to 335 (SRSRKSKKQR). Residues 448-620 (PRAPVVTVMG…IILTADAELD (173 aa)) enclose the tr-type G domain. Positions 457–464 (GHVDHGKT) are G1. 457 to 464 (GHVDHGKT) is a binding site for GTP. A G2 region spans residues 482–486 (GITQH). The interval 507 to 510 (DTPG) is G3. GTP-binding positions include 507 to 511 (DTPGH) and 561 to 564 (NKID). The segment at 561–564 (NKID) is G4. A G5 region spans residues 597 to 599 (SAK).

The protein belongs to the TRAFAC class translation factor GTPase superfamily. Classic translation factor GTPase family. IF-2 subfamily.

The protein resides in the cytoplasm. One of the essential components for the initiation of protein synthesis. Protects formylmethionyl-tRNA from spontaneous hydrolysis and promotes its binding to the 30S ribosomal subunits. Also involved in the hydrolysis of GTP during the formation of the 70S ribosomal complex. The sequence is that of Translation initiation factor IF-2 from Thermobifida fusca (strain YX).